We begin with the raw amino-acid sequence, 76 residues long: Small ribosomal subunit protein bS18 (76 aa).

It belongs to the bacterial ribosomal protein bS18 family. In terms of assembly, part of the 30S ribosomal subunit. Forms a tight heterodimer with protein bS6.

Binds as a heterodimer with protein bS6 to the central domain of the 16S rRNA, where it helps stabilize the platform of the 30S subunit. This chain is Small ribosomal subunit protein bS18, found in Psychrobacter arcticus (strain DSM 17307 / VKM B-2377 / 273-4).